The sequence spans 177 residues: Large ribosomal subunit protein uL6 (177 aa).

Belongs to the universal ribosomal protein uL6 family. As to quaternary structure, part of the 50S ribosomal subunit.

Functionally, this protein binds to the 23S rRNA, and is important in its secondary structure. It is located near the subunit interface in the base of the L7/L12 stalk, and near the tRNA binding site of the peptidyltransferase center. This is Large ribosomal subunit protein uL6 from Teredinibacter turnerae (strain ATCC 39867 / T7901).